Here is a 536-residue protein sequence, read N- to C-terminus: Probable cytochrome P450 520A1 (536 aa).

The chain crosses the membrane as a helical span at residues 1 to 21 (MEILTFIIYLITFFILFDFYK). C479 contributes to the heme binding site.

Belongs to the cytochrome P450 family. The cofactor is heme.

It is found in the membrane. The protein is Probable cytochrome P450 520A1 (cyp520A1) of Dictyostelium discoideum (Social amoeba).